A 426-amino-acid polypeptide reads, in one-letter code: Enolase (426 aa).

Q163 is a (2R)-2-phosphoglycerate binding site. The Proton donor role is filled by E205. Mg(2+) contacts are provided by D242, E283, and D310. The (2R)-2-phosphoglycerate site is built by K335, R364, S365, and K386. K335 (proton acceptor) is an active-site residue.

Belongs to the enolase family. It depends on Mg(2+) as a cofactor.

Its subcellular location is the cytoplasm. It is found in the secreted. It localises to the cell surface. The enzyme catalyses (2R)-2-phosphoglycerate = phosphoenolpyruvate + H2O. Its pathway is carbohydrate degradation; glycolysis; pyruvate from D-glyceraldehyde 3-phosphate: step 4/5. Functionally, catalyzes the reversible conversion of 2-phosphoglycerate (2-PG) into phosphoenolpyruvate (PEP). It is essential for the degradation of carbohydrates via glycolysis. The sequence is that of Enolase from Paenarthrobacter aurescens (strain TC1).